The primary structure comprises 566 residues: MTTREYDYIICGAGSAGNVLATRLTEDPDVTVLLLEAGGPDYRFDFRTQMPAALAYPLQGRRYNWAYETDPEPHMDNRRMECGRGKGLGGSSLINGMCYIRGNALDYDNWSTHKGLENWTYLDCLPYFKKAETRDVGPNDYHGGNGPVSVTTSKPGVNPLFEAMVDAGVQAGYPRTDDLNGYQQEGFGPMDRTVTPKGRRASTARGYLDQAKVRPNLEIVTHALADRILFDGKRASGVTYLRGSERATAHARREVLVCSGAIASPQLLQRSGVGPGAWLKELDIPVVLDLPGVGQNLQDHLEMYIQYECKEPVSLYPALKWWNQPKIGLEWMLNGTGLGASNHFEAGGFIRTRDDDLWPNIQYHFLPVAINYNGSNAIEMHGFQAHVGSMRSPSRGRVKLRSRDPNDHPSILFNYMAEALDWREFRDAIRATREIMRQPALDRYRGRELNPGADCKSDKELDAFVRARAETAFHPSCSCKMGYDDMAVVDEEGRVHGLEGLRVVDASIMPIITTGNLNAPTIMIAEKIADKIRGRKALARVDVPYFVANGAMARNIAKAVRQPETV.

Residue D7–E36 participates in FAD binding. Residues N180–S202 are disordered. H474 functions as the Proton acceptor in the catalytic mechanism.

Belongs to the GMC oxidoreductase family. FAD serves as cofactor.

The enzyme catalyses choline + A = betaine aldehyde + AH2. It catalyses the reaction betaine aldehyde + NAD(+) + H2O = glycine betaine + NADH + 2 H(+). Its pathway is amine and polyamine biosynthesis; betaine biosynthesis via choline pathway; betaine aldehyde from choline (cytochrome c reductase route): step 1/1. In terms of biological role, involved in the biosynthesis of the osmoprotectant glycine betaine. Catalyzes the oxidation of choline to betaine aldehyde and betaine aldehyde to glycine betaine at the same rate. The protein is Oxygen-dependent choline dehydrogenase of Burkholderia lata (strain ATCC 17760 / DSM 23089 / LMG 22485 / NCIMB 9086 / R18194 / 383).